Consider the following 475-residue polypeptide: ATP synthase subunit beta, chloroplastic (475 aa).

155–162 (GGAGVGKT) is a binding site for ATP.

This sequence belongs to the ATPase alpha/beta chains family. F-type ATPases have 2 components, CF(1) - the catalytic core - and CF(0) - the membrane proton channel. CF(1) has five subunits: alpha(3), beta(3), gamma(1), delta(1), epsilon(1). CF(0) has four main subunits: a(1), b(1), b'(1) and c(9-12).

The protein localises to the plastid. It is found in the chloroplast thylakoid membrane. The enzyme catalyses ATP + H2O + 4 H(+)(in) = ADP + phosphate + 5 H(+)(out). In terms of biological role, produces ATP from ADP in the presence of a proton gradient across the membrane. The catalytic sites are hosted primarily by the beta subunits. This is ATP synthase subunit beta, chloroplastic from Pyropia yezoensis (Susabi-nori).